A 183-amino-acid polypeptide reads, in one-letter code: 2-C-methyl-D-erythritol 2,4-cyclodiphosphate synthase (183 aa).

Positions 8 and 10 each coordinate a divalent metal cation. Residues 8-10 and 34-35 contribute to the 4-CDP-2-C-methyl-D-erythritol 2-phosphate site; these read DVH and HS. Position 42 (His-42) interacts with a divalent metal cation. 4-CDP-2-C-methyl-D-erythritol 2-phosphate contacts are provided by residues 56 to 58, 61 to 65, 132 to 135, and Phe-139; these read DIG, FPDTD, and TTEE.

It belongs to the IspF family. As to quaternary structure, homotrimer. A divalent metal cation serves as cofactor.

The catalysed reaction is 4-CDP-2-C-methyl-D-erythritol 2-phosphate = 2-C-methyl-D-erythritol 2,4-cyclic diphosphate + CMP. It functions in the pathway isoprenoid biosynthesis; isopentenyl diphosphate biosynthesis via DXP pathway; isopentenyl diphosphate from 1-deoxy-D-xylulose 5-phosphate: step 4/6. Involved in the biosynthesis of isopentenyl diphosphate (IPP) and dimethylallyl diphosphate (DMAPP), two major building blocks of isoprenoid compounds. Catalyzes the conversion of 4-diphosphocytidyl-2-C-methyl-D-erythritol 2-phosphate (CDP-ME2P) to 2-C-methyl-D-erythritol 2,4-cyclodiphosphate (ME-CPP) with a corresponding release of cytidine 5-monophosphate (CMP). This Lachnospira eligens (strain ATCC 27750 / DSM 3376 / VPI C15-48 / C15-B4) (Eubacterium eligens) protein is 2-C-methyl-D-erythritol 2,4-cyclodiphosphate synthase.